The sequence spans 508 residues: Protein FAM217A (508 aa).

Belongs to the FAM217 family.

This Homo sapiens (Human) protein is Protein FAM217A (FAM217A).